The sequence spans 335 residues: Aspartate--ammonia ligase (335 aa).

The protein belongs to the class-II aminoacyl-tRNA synthetase family. AsnA subfamily.

Its subcellular location is the cytoplasm. The enzyme catalyses L-aspartate + NH4(+) + ATP = L-asparagine + AMP + diphosphate + H(+). It functions in the pathway amino-acid biosynthesis; L-asparagine biosynthesis; L-asparagine from L-aspartate (ammonia route): step 1/1. The protein is Aspartate--ammonia ligase of Levilactobacillus brevis (strain ATCC 367 / BCRC 12310 / CIP 105137 / JCM 1170 / LMG 11437 / NCIMB 947 / NCTC 947) (Lactobacillus brevis).